A 617-amino-acid chain; its full sequence is Dihydroxy-acid dehydratase (617 aa).

Aspartate 81 lines the Mg(2+) pocket. Residue cysteine 122 coordinates [2Fe-2S] cluster. Residues aspartate 123 and lysine 124 each contribute to the Mg(2+) site. Residue lysine 124 is modified to N6-carboxylysine. [2Fe-2S] cluster is bound at residue cysteine 195. Residue glutamate 492 coordinates Mg(2+). Catalysis depends on serine 518, which acts as the Proton acceptor.

Belongs to the IlvD/Edd family. As to quaternary structure, homodimer. It depends on [2Fe-2S] cluster as a cofactor. Mg(2+) is required as a cofactor.

The catalysed reaction is (2R)-2,3-dihydroxy-3-methylbutanoate = 3-methyl-2-oxobutanoate + H2O. It catalyses the reaction (2R,3R)-2,3-dihydroxy-3-methylpentanoate = (S)-3-methyl-2-oxopentanoate + H2O. The protein operates within amino-acid biosynthesis; L-isoleucine biosynthesis; L-isoleucine from 2-oxobutanoate: step 3/4. Its pathway is amino-acid biosynthesis; L-valine biosynthesis; L-valine from pyruvate: step 3/4. In terms of biological role, functions in the biosynthesis of branched-chain amino acids. Catalyzes the dehydration of (2R,3R)-2,3-dihydroxy-3-methylpentanoate (2,3-dihydroxy-3-methylvalerate) into 2-oxo-3-methylpentanoate (2-oxo-3-methylvalerate) and of (2R)-2,3-dihydroxy-3-methylbutanoate (2,3-dihydroxyisovalerate) into 2-oxo-3-methylbutanoate (2-oxoisovalerate), the penultimate precursor to L-isoleucine and L-valine, respectively. This chain is Dihydroxy-acid dehydratase, found in Xanthobacter autotrophicus (strain ATCC BAA-1158 / Py2).